Here is a 57-residue protein sequence, read N- to C-terminus: UPF0391 membrane protein Nham_2738 (57 aa).

2 consecutive transmembrane segments (helical) span residues 4 to 24 and 30 to 50; these read WVVT…GGLA and IAKI…VVGL.

The protein belongs to the UPF0391 family.

It localises to the cell membrane. This chain is UPF0391 membrane protein Nham_2738, found in Nitrobacter hamburgensis (strain DSM 10229 / NCIMB 13809 / X14).